The following is a 736-amino-acid chain: uncharacterized protein (736 aa).

ABC transporter domains are found at residues 183 to 459 (IKID…KQME) and 518 to 734 (LQMS…TMTI). ATP-binding positions include 215–222 (GRNGIGKS) and 551–558 (GPNGAGKS).

This sequence belongs to the ABC transporter superfamily.

The protein localises to the cytoplasm. This is an uncharacterized protein from Schizosaccharomyces pombe (strain 972 / ATCC 24843) (Fission yeast).